We begin with the raw amino-acid sequence, 102 residues long: Small ribosomal subunit protein bS6 (102 aa).

It belongs to the bacterial ribosomal protein bS6 family.

In terms of biological role, binds together with bS18 to 16S ribosomal RNA. The polypeptide is Small ribosomal subunit protein bS6 (rpsF) (Deinococcus radiodurans (strain ATCC 13939 / DSM 20539 / JCM 16871 / CCUG 27074 / LMG 4051 / NBRC 15346 / NCIMB 9279 / VKM B-1422 / R1)).